A 550-amino-acid polypeptide reads, in one-letter code: Glucose-6-phosphate isomerase (550 aa).

Catalysis depends on Glu357, which acts as the Proton donor. Residues His389 and Lys509 contribute to the active site.

It belongs to the GPI family.

The protein localises to the cytoplasm. The enzyme catalyses alpha-D-glucose 6-phosphate = beta-D-fructose 6-phosphate. It functions in the pathway carbohydrate biosynthesis; gluconeogenesis. The protein operates within carbohydrate degradation; glycolysis; D-glyceraldehyde 3-phosphate and glycerone phosphate from D-glucose: step 2/4. Its function is as follows. Catalyzes the reversible isomerization of glucose-6-phosphate to fructose-6-phosphate. This Anaeromyxobacter dehalogenans (strain 2CP-C) protein is Glucose-6-phosphate isomerase.